The chain runs to 58 residues: UPF0434 protein NT01EI_2448 (58 aa).

This sequence belongs to the UPF0434 family.

This chain is UPF0434 protein NT01EI_2448, found in Edwardsiella ictaluri (strain 93-146).